The following is a 234-amino-acid chain: Riboflavin kinase (234 aa).

The segment at 1–98 (MAESTTAVGH…QEIFGDNSSV (98 aa)) is H-T-H motif-like. Positions 99 to 234 (VELTGTVTSG…RITVQLKPKE (136 aa)) are riboflavin kinase. 108-113 (GMGEGR) is a CDP binding site. The Mg(2+) site is built by threonine 137 and asparagine 139. Threonine 199 and glutamate 207 together coordinate FMN. Residue 212-215 (ERLR) participates in CDP binding.

The protein belongs to the archaeal riboflavin kinase family. Mg(2+) serves as cofactor.

The catalysed reaction is riboflavin + CTP = CDP + FMN + H(+). It functions in the pathway cofactor biosynthesis; FMN biosynthesis; FMN from riboflavin (CTP route): step 1/1. Its function is as follows. Catalyzes the CTP-dependent phosphorylation of riboflavin (vitamin B2) to form flavin mononucleotide (FMN). This is Riboflavin kinase (ribK) from Haloquadratum walsbyi (strain DSM 16790 / HBSQ001).